The following is a 671-amino-acid chain: Copper amine oxidase 1 (671 aa).

The N2 stretch occupies residues 3–106; the sequence is PHPLAILSEE…QHRVVGKEHH (104 aa). Positions 107–211 are N3; it reads ASLTLSEFDT…DRPATGGKGE (105 aa). A substrate-binding site is contributed by 319 to 330; sequence AFDFGDGGGGNM. D321 functions as the Proton acceptor in the catalytic mechanism. The cysteines at positions 340 and 366 are disulfide-linked. 402 to 407 serves as a coordination point for substrate; sequence LANYEY. Residue Y405 is the Schiff-base intermediate with substrate; via topaquinone of the active site. Y405 carries the post-translational modification 2',4',5'-topaquinone. Cu cation is bound by residues H455 and H457. D464 lines the Mn(2+) pocket. An N-linked (GlcNAc...) asparagine glycan is attached at N471. D606 contributes to the Mn(2+) binding site. H617 lines the Cu cation pocket.

It belongs to the copper/topaquinone oxidase family. As to quaternary structure, homodimer. Cu cation is required as a cofactor. Requires Zn(2+) as cofactor. It depends on L-topaquinone as a cofactor. Mn(2+) serves as cofactor. In terms of processing, topaquinone (TPQ) is generated by copper-dependent autoxidation of a specific tyrosyl residue.

It carries out the reaction histamine + O2 + H2O = imidazole-4-acetaldehyde + H2O2 + NH4(+). The chain is Copper amine oxidase 1 (AO-I) from Aspergillus niger.